The chain runs to 545 residues: Glucose-6-phosphate isomerase (545 aa).

The active-site Proton donor is glutamate 351. Active-site residues include histidine 382 and lysine 510.

The protein belongs to the GPI family.

It is found in the cytoplasm. It carries out the reaction alpha-D-glucose 6-phosphate = beta-D-fructose 6-phosphate. The protein operates within carbohydrate biosynthesis; gluconeogenesis. It functions in the pathway carbohydrate degradation; glycolysis; D-glyceraldehyde 3-phosphate and glycerone phosphate from D-glucose: step 2/4. In terms of biological role, catalyzes the reversible isomerization of glucose-6-phosphate to fructose-6-phosphate. The chain is Glucose-6-phosphate isomerase from Helicobacter pylori (strain ATCC 700392 / 26695) (Campylobacter pylori).